Here is a 250-residue protein sequence, read N- to C-terminus: MRKTIIAGNWKMNLSLKEAVFLAHSIREKIPSISKDKVSMVFPSTLHLENVSKILEGSSVIVGAQNCYHSGLAAFTGETSPDQLKEIGVKVVMVGHSERRQFLGESNFFCNDKIRFLLKNEFTVLYCVGETLSERESGKTLEVLSSQIREGLKGIDSVFFSNLILAYEPVWAIGTGKVATPSQAQEVHSFIRKEISGLFVGASSISESISILYGGSVKPDNIQDLLKEKDIDGGLVGGASQKISSFAELF.

Residue 9-11 (NWK) coordinates substrate. The Electrophile role is filled by H96. The active-site Proton acceptor is E168. Substrate is bound by residues G174, S216, and 237–238 (GG).

This sequence belongs to the triosephosphate isomerase family. Homodimer.

Its subcellular location is the cytoplasm. The catalysed reaction is D-glyceraldehyde 3-phosphate = dihydroxyacetone phosphate. Its pathway is carbohydrate biosynthesis; gluconeogenesis. The protein operates within carbohydrate degradation; glycolysis; D-glyceraldehyde 3-phosphate from glycerone phosphate: step 1/1. In terms of biological role, involved in the gluconeogenesis. Catalyzes stereospecifically the conversion of dihydroxyacetone phosphate (DHAP) to D-glyceraldehyde-3-phosphate (G3P). The chain is Triosephosphate isomerase from Leptospira interrogans serogroup Icterohaemorrhagiae serovar Lai (strain 56601).